The primary structure comprises 901 residues: MLIKMLTKVFGSRNDRTLRRMRKVVALINGMEPALEKLSDEELKAKTAEFRARLEKGETLENLLPEAFAVVREASKRVFGMRHFDVQLLGGMVLNDRCIAEMRTGEGKTLTATLPAYLNALTGKGVHVVTVNDYLAQRDAENNRPLFEFLGMSVAVNMSGMPAPAKREAYAADITYGTNNEYGFDYLRDNMAFSPEERVQRKLHYALVDEVDSILIDEARTPLIISGPAEDSSELYKKVNKIIPHLVRQEKEDSDTFQGEGHFSVDEKARQVNLTERGLVLVEELLVKEGIMDEGESLYSPGNIMLMHHVTAALRAHVLFTRDVDYIVKDGEVIIVDEHTGRTMQGRRWSDGLHQAVEAKEGVEIQNENQTLASITFQNYFRLYEKLAGMTGTADTEAFEFSSIYKLDTVVVPTNRPMIRKDLPDLVYMTEAEKIDAIIEDIKERTAKGQPVLVGTISIEKSEVISQALTKAGIEHNVLNAKFHAREADIVAQAGYPGAVTIATNMAGRGTDIMLGGSWQAEVAELEAPSEEQIAQIKADWQKRHDAVLASGGLHIIGTERHESRRIDNQLRGRSGRQGDPGSSRFYLSMEDALMRIFASDRVANMMRKLGMKPGEAIEHPWVTKAIANAQRKVESRNFDIRKQLLEYDDVANDQRRAIYTQRNELLDVADISETINSIREDVFKATIDAHIPPQSLEEMWDIPGLEERLKNDFDLELPIAQWLDKEPELHEETLRERILESAKEVYARKEEVVGAEMMRHFEKGVMLQTLDSLWKEHLAAMDYLRQGIHLRGYAQKDPKQEYKRESFAMFAAMLESLKYEVISTISKVQVRMPEEVEAMEQQRREEAERLAQMQQLSHQDDETAAAAALAEQTGERKVGRNDPCPCGSGKKYKQCHGRLS.

ATP-binding positions include Q87, 105–109 (GEGKT), and D512. Positions 855-891 (QQLSHQDDETAAAAALAEQTGERKVGRNDPCPCGSGK) are disordered. 4 residues coordinate Zn(2+): C885, C887, C896, and H897.

Belongs to the SecA family. In terms of assembly, monomer and homodimer. Part of the essential Sec protein translocation apparatus which comprises SecA, SecYEG and auxiliary proteins SecDF-YajC and YidC. Zn(2+) serves as cofactor.

It localises to the cell inner membrane. Its subcellular location is the cytoplasm. It catalyses the reaction ATP + H2O + cellular proteinSide 1 = ADP + phosphate + cellular proteinSide 2.. Its function is as follows. Part of the Sec protein translocase complex. Interacts with the SecYEG preprotein conducting channel. Has a central role in coupling the hydrolysis of ATP to the transfer of proteins into and across the cell membrane, serving both as a receptor for the preprotein-SecB complex and as an ATP-driven molecular motor driving the stepwise translocation of polypeptide chains across the membrane. The protein is Protein translocase subunit SecA of Cronobacter sakazakii (strain ATCC BAA-894) (Enterobacter sakazakii).